Here is a 415-residue protein sequence, read N- to C-terminus: Putative F-box protein At5g40050 (415 aa).

In terms of domain architecture, F-box spans 13–59 (IDSISPLPDELLSHILSFLPTKRAASTSILSKRWRTLFPLMNHLCAS).

In Arabidopsis thaliana (Mouse-ear cress), this protein is Putative F-box protein At5g40050.